Reading from the N-terminus, the 212-residue chain is Peroxiredoxin 2 (212 aa).

A Thioredoxin domain is found at proline 7–leucine 162. Cysteine 49 functions as the Cysteine sulfenic acid (-SOH) intermediate in the catalytic mechanism. Arginine 125 contacts substrate.

Belongs to the peroxiredoxin family. Prx6 subfamily. In terms of assembly, homodecamer. Pentamer of dimers that assemble into a ring structure.

The protein localises to the cytoplasm. It catalyses the reaction a hydroperoxide + [thioredoxin]-dithiol = an alcohol + [thioredoxin]-disulfide + H2O. In terms of biological role, thiol-specific peroxidase that catalyzes the reduction of hydrogen peroxide and organic hydroperoxides to water and alcohols, respectively. Plays a role in cell protection against oxidative stress by detoxifying peroxides. The protein is Peroxiredoxin 2 of Sulfurisphaera tokodaii (strain DSM 16993 / JCM 10545 / NBRC 100140 / 7) (Sulfolobus tokodaii).